The primary structure comprises 153 residues: Transcriptional repressor NrdR (153 aa).

A zinc finger spans residues Cys-3–Cys-34. The ATP-cone domain maps to Phe-49–Asp-139.

It belongs to the NrdR family. The cofactor is Zn(2+).

Negatively regulates transcription of bacterial ribonucleotide reductase nrd genes and operons by binding to NrdR-boxes. The protein is Transcriptional repressor NrdR of Ehrlichia canis (strain Jake).